The primary structure comprises 683 residues: Inositol-trisphosphate 3-kinase C (683 aa).

The tract at residues 1–124 (MRRCPCRGSL…PDRSSLRTHL (124 aa)) is disordered. Over residues 13 to 22 (AEAGALPAAA) the composition is skewed to low complexity. Gly residues predominate over residues 44–58 (PGAGAPAGRPEGGGP). Residues 105–124 (ETERPKQKTEPDRSSLRTHL) show a composition bias toward basic and acidic residues. Residues Ser127 and Ser162 each carry the phosphoserine modification. Residues 147–308 (TDPHRSDLQF…EDGPLEEPEP (162 aa)) form a disordered region. Positions 196–206 (WTHQNSSSLQT) are enriched in polar residues. The segment covering 249 to 259 (SQKKQDTEAAR) has biased composition (basic and acidic residues). Positions 267–289 (FQIQQDTDGSWTQPSTDGSQTAP) are enriched in polar residues. A compositionally biased stretch (acidic residues) spans 297–308 (EPEDGPLEEPEP). Positions 324–332 (LCPVPRLII) match the Nuclear export signal motif. The tract at residues 334 to 387 (PETPEPEAQPVGPPSRVEGGSGGFSSASSFDESEDDVVAGGGGASDPEDRSGSK) is disordered. Phosphothreonine is present on Thr336. Residue Ser404 is modified to Phosphoserine. ATP is bound by residues Lys431, 471 to 473 (EDL), and Asp484. Substrate contacts are provided by residues Lys486, 507–513 (RKDMYEK), and 534–541 (KPRYMQWR). The calmodulin-binding stretch occupies residues 509-517 (DMYEKMVAV). Positions 558 and 638 each coordinate ATP. Lys641 serves as a coordination point for substrate.

The protein belongs to the inositol phosphokinase (IPK) family. In terms of tissue distribution, highly expressed in pancreas, skeletal muscle, liver, placenta and weakly in kidney and brain.

The protein resides in the nucleus. It localises to the cytoplasm. The catalysed reaction is 1D-myo-inositol 1,4,5-trisphosphate + ATP = 1D-myo-inositol 1,3,4,5-tetrakisphosphate + ADP + H(+). Activated by calcium/calmodulin. Inhibited by high concentrations of the substrate Ins(1,2,4)P3, and allosterically activated by the product Ins(1,3,4,5)P4. Its function is as follows. Catalyzes the phosphorylation of 1D-myo-inositol 1,4,5-trisphosphate (InsP3) into 1D-myo-inositol 1,3,4,5-tetrakisphosphate and participates to the regulation of calcium homeostasis. Can phosphorylate inositol 2,4,5-triphosphate to inositol 2,4,5,6-tetraphosphate. The chain is Inositol-trisphosphate 3-kinase C from Homo sapiens (Human).